The following is a 333-amino-acid chain: Holliday junction branch migration complex subunit RuvB (333 aa).

The tract at residues methionine 1–tyrosine 173 is large ATPase domain (RuvB-L). Residues leucine 11, arginine 12, glycine 53, lysine 56, threonine 57, threonine 58, glutamate 120 to phenylalanine 122, arginine 163, tyrosine 173, and arginine 210 each bind ATP. A Mg(2+)-binding site is contributed by threonine 57. A small ATPAse domain (RuvB-S) region spans residues threonine 174 to glycine 244. Residues serine 247–asparagine 333 form a head domain (RuvB-H) region. Arginine 302 and arginine 307 together coordinate DNA.

Belongs to the RuvB family. In terms of assembly, homohexamer. Forms an RuvA(8)-RuvB(12)-Holliday junction (HJ) complex. HJ DNA is sandwiched between 2 RuvA tetramers; dsDNA enters through RuvA and exits via RuvB. An RuvB hexamer assembles on each DNA strand where it exits the tetramer. Each RuvB hexamer is contacted by two RuvA subunits (via domain III) on 2 adjacent RuvB subunits; this complex drives branch migration. In the full resolvosome a probable DNA-RuvA(4)-RuvB(12)-RuvC(2) complex forms which resolves the HJ.

It is found in the cytoplasm. The enzyme catalyses ATP + H2O = ADP + phosphate + H(+). In terms of biological role, the RuvA-RuvB-RuvC complex processes Holliday junction (HJ) DNA during genetic recombination and DNA repair, while the RuvA-RuvB complex plays an important role in the rescue of blocked DNA replication forks via replication fork reversal (RFR). RuvA specifically binds to HJ cruciform DNA, conferring on it an open structure. The RuvB hexamer acts as an ATP-dependent pump, pulling dsDNA into and through the RuvAB complex. RuvB forms 2 homohexamers on either side of HJ DNA bound by 1 or 2 RuvA tetramers; 4 subunits per hexamer contact DNA at a time. Coordinated motions by a converter formed by DNA-disengaged RuvB subunits stimulates ATP hydrolysis and nucleotide exchange. Immobilization of the converter enables RuvB to convert the ATP-contained energy into a lever motion, pulling 2 nucleotides of DNA out of the RuvA tetramer per ATP hydrolyzed, thus driving DNA branch migration. The RuvB motors rotate together with the DNA substrate, which together with the progressing nucleotide cycle form the mechanistic basis for DNA recombination by continuous HJ branch migration. Branch migration allows RuvC to scan DNA until it finds its consensus sequence, where it cleaves and resolves cruciform DNA. The polypeptide is Holliday junction branch migration complex subunit RuvB (Deinococcus radiodurans (strain ATCC 13939 / DSM 20539 / JCM 16871 / CCUG 27074 / LMG 4051 / NBRC 15346 / NCIMB 9279 / VKM B-1422 / R1)).